The sequence spans 72 residues: Translation initiation factor IF-1 (72 aa).

One can recognise an S1-like domain in the interval 1 to 72 (MAKTDLLEVQ…ERGRIVFRHK (72 aa)).

This sequence belongs to the IF-1 family. Component of the 30S ribosomal translation pre-initiation complex which assembles on the 30S ribosome in the order IF-2 and IF-3, IF-1 and N-formylmethionyl-tRNA(fMet); mRNA recruitment can occur at any time during PIC assembly.

The protein resides in the cytoplasm. In terms of biological role, one of the essential components for the initiation of protein synthesis. Stabilizes the binding of IF-2 and IF-3 on the 30S subunit to which N-formylmethionyl-tRNA(fMet) subsequently binds. Helps modulate mRNA selection, yielding the 30S pre-initiation complex (PIC). Upon addition of the 50S ribosomal subunit IF-1, IF-2 and IF-3 are released leaving the mature 70S translation initiation complex. This chain is Translation initiation factor IF-1, found in Spiroplasma kunkelii.